The sequence spans 173 residues: uncharacterized protein (173 aa).

Residues 1 to 15 constitute a propeptide, leader sequence; the sequence is MERKLSQRAGNTFKG. At phenylalanine 16 the chain carries N-methylphenylalanine. The chain crosses the membrane as a helical span at residues 16 to 37; sequence FTLVEVLITLAIISLVFSLILI.

It localises to the membrane. This is an uncharacterized protein from Aquifex aeolicus (strain VF5).